The sequence spans 214 residues: UPF0725 protein At1g19565 (214 aa).

The segment at 56-92 (EEEYEPSLPSSESPTDSCHADHESPDSPKYQQPAPGE) is disordered.

It belongs to the UPF0725 (EMB2204) family.

This chain is UPF0725 protein At1g19565, found in Arabidopsis thaliana (Mouse-ear cress).